A 393-amino-acid polypeptide reads, in one-letter code: Protein FAM53C (393 aa).

N-acetylmethionine is present on methionine 1. The disordered stretch occupies residues 77-120; that stretch reads HLRPPSRGNSPKEPPLSQVLSPEPPDPEKLPVPPAPPSKRHCRS. Phosphoserine occurs at positions 122 and 162. 2 disordered regions span residues 141-167 and 204-283; these read LWTP…PKRV and QPCA…ARKT. A compositionally biased stretch (polar residues) spans 204–215; the sequence is QPCATSPQSGSW. Phosphoserine is present on residues serine 232, serine 234, serine 255, serine 273, and serine 299. A compositionally biased stretch (low complexity) spans 241 to 256; that stretch reads ASRFLPSARSSPASSP. Over residues 343–355 the composition is skewed to low complexity; the sequence is SCSPVEGSSQVLS. The segment at 343–365 is disordered; that stretch reads SCSPVEGSSQVLSESEEEEEGSV.

The protein belongs to the FAM53 family.

In Mus musculus (Mouse), this protein is Protein FAM53C.